We begin with the raw amino-acid sequence, 449 residues long: Glucose-6-phosphate isomerase (449 aa).

Catalysis depends on E291, which acts as the Proton donor. Residues H312 and K426 contribute to the active site.

This sequence belongs to the GPI family.

The protein resides in the cytoplasm. It carries out the reaction alpha-D-glucose 6-phosphate = beta-D-fructose 6-phosphate. The protein operates within carbohydrate biosynthesis; gluconeogenesis. It functions in the pathway carbohydrate degradation; glycolysis; D-glyceraldehyde 3-phosphate and glycerone phosphate from D-glucose: step 2/4. Its function is as follows. Catalyzes the reversible isomerization of glucose-6-phosphate to fructose-6-phosphate. This Streptococcus equi subsp. zooepidemicus (strain MGCS10565) protein is Glucose-6-phosphate isomerase.